Consider the following 132-residue polypeptide: Phosphoribosyl-AMP cyclohydrolase (132 aa).

Asp82 lines the Mg(2+) pocket. Cys83 contacts Zn(2+). The Mg(2+) site is built by Asp84 and Asp86. Residues Cys100 and Cys107 each contribute to the Zn(2+) site.

It belongs to the PRA-CH family. As to quaternary structure, homodimer. Mg(2+) is required as a cofactor. The cofactor is Zn(2+).

The protein resides in the cytoplasm. The catalysed reaction is 1-(5-phospho-beta-D-ribosyl)-5'-AMP + H2O = 1-(5-phospho-beta-D-ribosyl)-5-[(5-phospho-beta-D-ribosylamino)methylideneamino]imidazole-4-carboxamide. Its pathway is amino-acid biosynthesis; L-histidine biosynthesis; L-histidine from 5-phospho-alpha-D-ribose 1-diphosphate: step 3/9. In terms of biological role, catalyzes the hydrolysis of the adenine ring of phosphoribosyl-AMP. The polypeptide is Phosphoribosyl-AMP cyclohydrolase (Dechloromonas aromatica (strain RCB)).